Consider the following 770-residue polypeptide: Nucleus-vacuole junction protein 2 (770 aa).

The Cytoplasmic segment spans residues 1-5 (MASLK). The chain crosses the membrane as a helical; Signal-anchor for type II membrane protein span at residues 6 to 26 (VFLAVYLLGGITFLPLVLFTL). Over 27–770 (YKIHLLYSNL…EFEEQREPKL (744 aa)) the chain is Lumenal. A PH domain is found at 114–266 (TALQEQILQR…WYYQLINASK (153 aa)). 7 N-linked (GlcNAc...) asparagine glycosylation sites follow: asparagine 228, asparagine 263, asparagine 279, asparagine 300, asparagine 391, asparagine 528, and asparagine 529. The 201-residue stretch at 304-504 (NQLTTKWLNA…YPTPNEVYRG (201 aa)) folds into the SMP-LTD domain. Disordered regions lie at residues 541 to 566 (EGGM…LKDL), 578 to 600 (TQTT…TKSR), and 615 to 770 (KDNV…EPKL). Over residues 554 to 566 (LRPERKKENLKDL) the composition is skewed to basic and acidic residues. The span at 587–596 (NDDVSSSENS) shows a compositional bias: polar residues. Asparagine 595 and asparagine 620 each carry an N-linked (GlcNAc...) asparagine glycan. Serine 640 and serine 669 each carry phosphoserine. A compositionally biased stretch (basic and acidic residues) spans 679–688 (LEGRKEKDTE). An N-linked (GlcNAc...) asparagine glycan is attached at asparagine 700. Polar residues-rich tracts occupy residues 713-725 (FSVS…NSLK) and 736-751 (LESS…QNRF). At serine 717 the chain carries Phosphoserine. Asparagine 718 carries N-linked (GlcNAc...) asparagine glycosylation. A phosphoserine mark is found at serine 720 and serine 723. Residues 756-770 (FKQDLEFEEQREPKL) are compositionally biased toward basic and acidic residues.

The protein localises to the endoplasmic reticulum membrane. Its subcellular location is the nucleus membrane. During endoplasmic reticulum (ER) stress or when cellular ceramide levels increase, induces contacts between the ER and medial-Golgi complex to facilitate non-vesicular transport of ceramides from the ER to the Golgi complex where they are converted to complex sphingolipids, preventing toxic ceramide accumulation. This is Nucleus-vacuole junction protein 2 from Saccharomyces cerevisiae (strain ATCC 204508 / S288c) (Baker's yeast).